The sequence spans 357 residues: Red-sensitive opsin-1 (357 aa).

Residues 1 to 49 (MAEHWGDAIYAARRKGDETTREAMFTYTNSNNTKDPFEGPNYHIAPRWV) lie on the Extracellular side of the membrane. Asparagine 31 is a glycosylation site (N-linked (GlcNAc...) asparagine). The chain crosses the membrane as a helical span at residues 50–74 (YNVATVWMFFVVVASTFTNGLVLVA). Residues 75–86 (TAKFKKLRHPLN) are Cytoplasmic-facing. Residues 87-112 (WILVNLAIADLGETLFASTISVINQF) form a helical membrane-spanning segment. Over 113–126 (FGYFILGHPMCIFE) the chain is Extracellular. A disulfide bridge links cysteine 123 with cysteine 200. The chain crosses the membrane as a helical span at residues 127–146 (GYTVSVCGIAALWSLTVISW). At 147–165 (ERWVVVCKPFGNVKFDAKW) the chain is on the cytoplasmic side. The chain crosses the membrane as a helical span at residues 166 to 189 (ASAGIIFSWVWAAAWCAPPIFGWS). Over 190–215 (RYWPHGLKTSCGPDVFSGSEDPGVQS) the chain is Extracellular. A helical transmembrane segment spans residues 216 to 243 (YMVVLMITCCIIPLAIIILCYIAVYLAI). At 244–265 (HAVAQQQKDSESTQKAEKEVSR) the chain is on the cytoplasmic side. A helical transmembrane segment spans residues 266 to 289 (MVVVMIFAYCFCWGPYTFFACFAA). Residues 290–297 (ANPGYAFH) lie on the Extracellular side of the membrane. A helical membrane pass occupies residues 298 to 322 (PLAAAMPAYFAKSATIYNPVIYVFM). An N6-(retinylidene)lysine modification is found at lysine 309. Over 323–357 (NRQFRVCIMQLFGKKVDDGSEVSTSKTEVSSVAPA) the chain is Cytoplasmic.

Belongs to the G-protein coupled receptor 1 family. Opsin subfamily. Post-translationally, phosphorylated on some or all of the serine and threonine residues present in the C-terminal region. Retinal double cone principal photoreceptor cell outer segments.

It localises to the membrane. Visual pigments are the light-absorbing molecules that mediate vision. They consist of an apoprotein, opsin, covalently linked to cis-retinal. The protein is Red-sensitive opsin-1 (opn1lw1) of Danio rerio (Zebrafish).